The sequence spans 861 residues: E3 ubiquitin-protein ligase SH3RF1 (861 aa).

Residues 12 to 53 form an RING-type zinc finger; that stretch reads CPVCLERLDASAKVLPCQHTFCKRCLLGIVSSRNELRCPECR. SH3 domains lie at 132–191 and 194–257; these read PQLP…IIKP and QPPP…FNSA. The segment at 268-319 is disordered; sequence SGVDTGEGSSGTTHSSNSQKQADAKKNTKKRHSFTSLTMSNKSSQSVQNRHS. Over residues 273–285 the composition is skewed to low complexity; it reads GEGSSGTTHSSNS. The segment covering 301 to 317 has biased composition (polar residues); that stretch reads FTSLTMSNKSSQSVQNR. In terms of domain architecture, SH3 3 spans 435-496; sequence TRPSVFVAIY…PGNYVAPVTR (62 aa). A disordered region spans residues 684–731; that stretch reads NSAANKQDKDSKKEKKGLLKLLSGASTKRKPRSSPPHSPTQELEQTNS. A compositionally biased stretch (basic and acidic residues) spans 689-700; the sequence is KQDKDSKKEKKG. The SH3 4 domain occupies 802 to 861; the sequence is RPCERYRVVVSYPPQSEAELELKEGDIVFVHKKREDGWFKGTLQRNGKTGLFPGSFVENI.

The protein belongs to the SH3RF family. Post-translationally, autoubiquitinated. Ubiquitinated by SH3RF2, leading to proteasome-mediated degradation.

The protein localises to the cytoplasm. Its subcellular location is the perinuclear region. It is found in the cell projection. The protein resides in the lamellipodium. It localises to the golgi apparatus. The protein localises to the trans-Golgi network. The catalysed reaction is S-ubiquitinyl-[E2 ubiquitin-conjugating enzyme]-L-cysteine + [acceptor protein]-L-lysine = [E2 ubiquitin-conjugating enzyme]-L-cysteine + N(6)-ubiquitinyl-[acceptor protein]-L-lysine.. It participates in protein modification; protein ubiquitination. Has E3 ubiquitin-protein ligase activity. In the absence of an external substrate, it can catalyze self-ubiquitination. Acts as a scaffold protein that contributes to the effective activation of the JNK signaling pathway. The sequence is that of E3 ubiquitin-protein ligase SH3RF1 (sh3rf1) from Xenopus tropicalis (Western clawed frog).